Consider the following 642-residue polypeptide: Mini-chromosome maintenance complex-binding protein (642 aa).

The span at 151–161 shows a compositional bias: polar residues; sequence ARVSPSTSYTP. Positions 151–188 are disordered; that stretch reads ARVSPSTSYTPSRHKRSYEDDEDMDLQPNKQKDQHMGA. Phosphoserine is present on S154. T160 carries the phosphothreonine modification. Phosphoserine occurs at positions 167 and 298.

The protein belongs to the MCMBP family. In terms of assembly, interacts with the MCM complex: associates with the MCM3-7 complex which lacks MCM2, while it does not interact with the MCM complex when MCM2 is present (MCM2-7 complex). Interacts with the RPA complex, when composed of all RPA1, RPA2 and RPA3 components, but not with RPA1 or RPA2 alone.

The protein resides in the nucleus. Its function is as follows. Associated component of the MCM complex that acts as a regulator of DNA replication. Binds to the MCM complex during late S phase and promotes the disassembly of the MCM complex from chromatin, thereby acting as a key regulator of pre-replication complex (pre-RC) unloading from replicated DNA. Can dissociate the MCM complex without addition of ATP; probably acts by destabilizing interactions of each individual subunits of the MCM complex. Required for sister chromatid cohesion. This is Mini-chromosome maintenance complex-binding protein (MCMBP) from Bos taurus (Bovine).